Consider the following 376-residue polypeptide: 1-acyl-sn-glycerol-3-phosphate acyltransferase gamma (376 aa).

The Cytoplasmic portion of the chain corresponds to methionine 1–lysine 124. Residues histidine 96–aspartate 101 carry the HXXXXD motif motif. The chain crosses the membrane as a helical span at residues glutamate 125–lysine 145. The Lumenal segment spans residues arginine 146–threonine 316. A helical membrane pass occupies residues isoleucine 317–leucine 339. Topologically, residues threonine 340–glutamate 376 are cytoplasmic.

The protein belongs to the 1-acyl-sn-glycerol-3-phosphate acyltransferase family. In terms of tissue distribution, widely expressed with highest levels in testis, pancreas and kidney, followed by spleen, lung, adipose tissue and liver.

The protein localises to the endoplasmic reticulum membrane. It is found in the nucleus envelope. The catalysed reaction is a 1-acyl-sn-glycero-3-phosphate + an acyl-CoA = a 1,2-diacyl-sn-glycero-3-phosphate + CoA. It carries out the reaction pentadecanoyl-CoA + 1-(9Z-octadecenoyl)-sn-glycero-3-phosphate = 1-(9Z)-octadecenoyl-2-pentadecanoyl-sn-glycero-3-phosphate + CoA. It catalyses the reaction heptadecanoyl-CoA + 1-(9Z-octadecenoyl)-sn-glycero-3-phosphate = 1-(9Z)-octadecenoyl-2-heptadecanoyl-sn-glycero-3-phosphate + CoA. The enzyme catalyses 1-(9Z-octadecenoyl)-sn-glycero-3-phosphate + octadecanoyl-CoA = 1-(9Z-octadecenoyl)-2-octadecanoyl-sn-glycero-3-phosphate + CoA. The catalysed reaction is nonadecanoyl-CoA + 1-(9Z-octadecenoyl)-sn-glycero-3-phosphate = 1-(9Z)-octadecenoyl-2-nonadecanoyl-sn-glycero-3-phosphate + CoA. It carries out the reaction 1-(9Z-octadecenoyl)-sn-glycero-3-phosphate + (5Z,8Z,11Z,14Z)-eicosatetraenoyl-CoA = 1-(9Z)-octadecenoyl-2-(5Z,8Z,11Z,14Z)-eicosatetraenoyl-sn-glycero-3-phosphate + CoA. It catalyses the reaction 1-(9Z-octadecenoyl)-sn-glycero-3-phosphate + (9Z)-octadecenoyl-CoA = 1,2-di-(9Z-octadecenoyl)-sn-glycero-3-phosphate + CoA. The enzyme catalyses 1-(9Z-octadecenoyl)-sn-glycero-3-phosphate + (9Z,12Z)-octadecadienoyl-CoA = 1-(9Z)-octadecenoyl-2-(9Z,12Z)-octadecadienoyl-sn-glycero-3-phosphate + CoA. The catalysed reaction is 1-(9Z-octadecenoyl)-sn-glycero-3-phosphocholine + (5Z,8Z,11Z,14Z)-eicosatetraenoyl-CoA = 1-(9Z)-octadecenoyl-2-(5Z,8Z,11Z,14Z)-icosatetraenoyl-sn-glycero-3-phosphocholine + CoA. It carries out the reaction 1-(9Z-octadecenoyl)-sn-glycero-3-phospho-(1D-myo-inositol) + (5Z,8Z,11Z,14Z)-eicosatetraenoyl-CoA = 1-(9Z-octadecenoyl)-2-(5Z,8Z,11Z,14Z-eicosatetraenoyl)-sn-glycero-3-phospho-1D-myo-inositol + CoA. It catalyses the reaction 1-(9Z-octadecenoyl)-sn-glycero-3-phospho-L-serine + (5Z,8Z,11Z,14Z)-eicosatetraenoyl-CoA = 1-(9Z-octadecenoyl)-2-(5Z,8Z,11Z,14Z-eicosatetraenoyl)-sn-glycero-3-phospho-L-serine + CoA. The enzyme catalyses 1-hexadecanoyl-sn-glycero-3-phosphate + (9Z)-octadecenoyl-CoA = 1-hexadecanoyl-2-(9Z-octadecenoyl)-sn-glycero-3-phosphate + CoA. The catalysed reaction is 1-hexadecanoyl-sn-glycero-3-phosphate + (5Z,8Z,11Z,14Z)-eicosatetraenoyl-CoA = 1-hexadecanoyl-2-(5Z,8Z,11Z,14Z-eicosatetraenoyl)-sn-glycero-3-phosphate + CoA. It carries out the reaction 1-heptadecanoyl-sn-glycero-3-phosphate + (5Z,8Z,11Z,14Z)-eicosatetraenoyl-CoA = 1-heptadecanoyl-2-(5Z,8Z,11Z,14Z)-eicosatetraenoyl-sn-glycero-3-phosphate + CoA. It catalyses the reaction 1-octadecanoyl-sn-glycero-3-phosphate + (9Z)-octadecenoyl-CoA = 1-octadecanoyl-2-(9Z-octadecenoyl)-sn-glycero-3-phosphate + CoA. The enzyme catalyses 1-octadecanoyl-sn-glycero-3-phosphate + (5Z,8Z,11Z,14Z)-eicosatetraenoyl-CoA = 1-octadecanoyl-2-(5Z,8Z,11Z,14Z-eicosatetraenoyl)-sn-glycero-3-phosphate + CoA. The catalysed reaction is 1-(9Z-octadecenoyl)-sn-glycero-3-phosphate + hexadecanoyl-CoA = 1-hexadecanoyl-2-(9Z-octadecenoyl)-sn-glycero-3-phosphate + CoA. It carries out the reaction 1-O-(9Z-octadecenyl)-sn-glycero-3-phosphate + (5Z,8Z,11Z,14Z)-eicosatetraenoyl-CoA = 1-O-(9Z-octadecenyl)-2-(5Z,8Z,11Z,14Z-eicosatetraenoyl)-sn-glycero-3-phosphate + CoA. It catalyses the reaction a 1-acyl-sn-glycero-3-phospho-(1D-myo-inositol) + (5Z,8Z,11Z,14Z)-eicosatetraenoyl-CoA = a 1-acyl-2-(5Z,8Z,11Z,14Z-eicosatetraenoyl)-sn-glycero-3-phospho-(1D-myo-inositol) + CoA. It participates in phospholipid metabolism; CDP-diacylglycerol biosynthesis; CDP-diacylglycerol from sn-glycerol 3-phosphate: step 2/3. Its function is as follows. Converts 1-acyl-sn-glycerol-3-phosphate (lysophosphatidic acid or LPA) into 1,2-diacyl-sn-glycerol-3-phosphate (phosphatidic acid or PA) by incorporating an acyl moiety at the sn-2 position of the glycerol backbone. Acts on LPA containing saturated or unsaturated fatty acids C16:0-C20:4 at the sn-1 position using C18:1, C20:4 or C18:2-CoA as the acyl donor. Also acts on lysophosphatidylcholine, lysophosphatidylinositol and lysophosphatidylserine using C18:1 or C20:4-CoA. Has a preference for arachidonoyl-CoA as a donor. Also has a modest lysophosphatidylinositol acyltransferase (LPIAT) activity, converts lysophosphatidylinositol (LPI) into phosphatidylinositol. The protein is 1-acyl-sn-glycerol-3-phosphate acyltransferase gamma (AGPAT3) of Homo sapiens (Human).